We begin with the raw amino-acid sequence, 481 residues long: Protein DETOXIFICATION 12 (481 aa).

Transmembrane regions (helical) follow at residues 38–58 (LIFFAAPMAAVVIAQFMLQIV), 76–96 (LASSFCNVTGFSFIIGLSCAL), 117–137 (YTAMFCLALVCLPLSLIWFNM), 154–174 (AGKYATWLIPGLFAYAVLQPL), 187–207 (LLITSYVVFCIHVPLCWFLVY), 214–234 (LGGALAISLSNWLYAIFLGSF), 267–287 (AAMICLEWWSYELIILLSGLL), 296–316 (VLSVCLQTISTMYSIPLAIAA), 336–356 (IVVYAAMSLAVIDALIVSMSL), 380–400 (MAPLVSISLMLDALQGVLSGI), 415–435 (LGAFYLWGIPIAASLAFWIHL), and 438–458 (VGLWIGIQAGAVLQTLLLALV).

The protein belongs to the multi antimicrobial extrusion (MATE) (TC 2.A.66.1) family.

Its subcellular location is the membrane. The sequence is that of Protein DETOXIFICATION 12 from Arabidopsis thaliana (Mouse-ear cress).